Here is a 179-residue protein sequence, read N- to C-terminus: Large ribosomal subunit protein uL5 (179 aa).

This sequence belongs to the universal ribosomal protein uL5 family. Part of the 50S ribosomal subunit; part of the 5S rRNA/L5/L18/L25 subcomplex. Contacts the 5S rRNA and the P site tRNA. Forms a bridge to the 30S subunit in the 70S ribosome.

Functionally, this is one of the proteins that bind and probably mediate the attachment of the 5S RNA into the large ribosomal subunit, where it forms part of the central protuberance. In the 70S ribosome it contacts protein S13 of the 30S subunit (bridge B1b), connecting the 2 subunits; this bridge is implicated in subunit movement. Contacts the P site tRNA; the 5S rRNA and some of its associated proteins might help stabilize positioning of ribosome-bound tRNAs. In Bacillus cereus (strain Q1), this protein is Large ribosomal subunit protein uL5.